Reading from the N-terminus, the 199-residue chain is Fe/S biogenesis protein NfuA (199 aa).

[4Fe-4S] cluster contacts are provided by cysteine 151 and cysteine 154.

Belongs to the NfuA family. In terms of assembly, homodimer. [4Fe-4S] cluster is required as a cofactor.

Involved in iron-sulfur cluster biogenesis. Binds a 4Fe-4S cluster, can transfer this cluster to apoproteins, and thereby intervenes in the maturation of Fe/S proteins. Could also act as a scaffold/chaperone for damaged Fe/S proteins. The polypeptide is Fe/S biogenesis protein NfuA (Stenotrophomonas maltophilia (strain R551-3)).